Reading from the N-terminus, the 447-residue chain is Glutamine synthetase (447 aa).

One can recognise a GS beta-grasp domain in the interval 20-105 (RDVKFIRTQF…ILGDVYLPDG (86 aa)). In terms of domain architecture, GS catalytic spans 112–447 (PRYVLKTAIK…WELSRYLSML (336 aa)). The Mg(2+) site is built by glutamate 135 and glutamate 137. Glutamate 187 provides a ligand contact to ATP. Mg(2+) is bound by residues glutamate 192 and glutamate 199. L-glutamate-binding positions include 243–244 (NG) and glycine 244. Histidine 248 is a binding site for Mg(2+). An ATP-binding site is contributed by serine 252. 3 residues coordinate L-glutamate: arginine 301, glutamate 307, and arginine 319. ATP is bound by residues arginine 319 and arginine 324. Glutamate 336 serves as a coordination point for Mg(2+). Residue arginine 338 participates in L-glutamate binding.

Belongs to the glutamine synthetase family. Homohexamer. Interacts and forms stable complexes with the regulatory protein GlnK1. Mg(2+) serves as cofactor.

Its subcellular location is the cytoplasm. The catalysed reaction is L-glutamate + NH4(+) + ATP = L-glutamine + ADP + phosphate + H(+). Its activity is regulated as follows. Directly stimulated by the effector molecule 2-oxoglutarate. Inhibited by GlnK1. 2-oxoglutarate antagonizes the inhibitory effects of GlnK1, but does not prevent GlnK1/GlnA1 complex formation. Its function is as follows. Probably involved in nitrogen metabolism via ammonium assimilation. Catalyzes the ATP-dependent biosynthesis of glutamine from glutamate and ammonia. This is Glutamine synthetase from Methanosarcina mazei (strain ATCC BAA-159 / DSM 3647 / Goe1 / Go1 / JCM 11833 / OCM 88) (Methanosarcina frisia).